Consider the following 194-residue polypeptide: Cilia- and flagella-associated protein 107 (194 aa).

Mn regions lie at residues Thr45 to His60 and Ile95 to Tyr107.

In terms of assembly, microtubule inner protein component of sperm flagellar doublet microtubules. Expressed in airway epithelial cells.

It localises to the cytoplasm. Its subcellular location is the cytoskeleton. It is found in the cilium axoneme. The protein resides in the flagellum axoneme. Functionally, microtubule inner protein (MIP) part of the dynein-decorated doublet microtubules (DMTs) in cilia axoneme, which is required for motile cilia beating. The chain is Cilia- and flagella-associated protein 107 from Homo sapiens (Human).